We begin with the raw amino-acid sequence, 298 residues long: tRNA dimethylallyltransferase 2 (298 aa).

19-26 is an ATP binding site; sequence GATATGKT. A substrate-binding site is contributed by 21–26; sequence TATGKT. An interaction with substrate tRNA region spans residues 44–47; that stretch reads DSRQ.

It belongs to the IPP transferase family. As to quaternary structure, monomer. It depends on Mg(2+) as a cofactor.

It catalyses the reaction adenosine(37) in tRNA + dimethylallyl diphosphate = N(6)-dimethylallyladenosine(37) in tRNA + diphosphate. Its function is as follows. Catalyzes the transfer of a dimethylallyl group onto the adenine at position 37 in tRNAs that read codons beginning with uridine, leading to the formation of N6-(dimethylallyl)adenosine (i(6)A). This Treponema denticola (strain ATCC 35405 / DSM 14222 / CIP 103919 / JCM 8153 / KCTC 15104) protein is tRNA dimethylallyltransferase 2.